A 162-amino-acid polypeptide reads, in one-letter code: MSKPLCSTGLRWLWLVVVVLIIDLGSKYLILQNFALGDTVSLFSSLNLHYARNYGAAFSFLADSGGWQRWFFAGIAIGICVILMVMMYRSKATQKLNNIAYALIIGGALGNLFDRLWHGFVVDMIDFYVGDWHFATFNLADSAICIGAALIVLEGFLPKKQA.

3 consecutive transmembrane segments (helical) span residues 12–32, 70–90, and 102–122; these read WLWLVVVVLIIDLGSKYLILQ, WFFAGIAIGICVILMVMMYRS, and ALIIGGALGNLFDRLWHGFVV. Catalysis depends on residues Asp-123 and Asp-141. Residues 137-157 traverse the membrane as a helical segment; it reads FNLADSAICIGAALIVLEGFL.

Belongs to the peptidase A8 family.

The protein localises to the cell inner membrane. The catalysed reaction is Release of signal peptides from bacterial membrane prolipoproteins. Hydrolyzes -Xaa-Yaa-Zaa-|-(S,diacylglyceryl)Cys-, in which Xaa is hydrophobic (preferably Leu), and Yaa (Ala or Ser) and Zaa (Gly or Ala) have small, neutral side chains.. The protein operates within protein modification; lipoprotein biosynthesis (signal peptide cleavage). In terms of biological role, this protein specifically catalyzes the removal of signal peptides from prolipoproteins. This is Lipoprotein signal peptidase from Citrobacter koseri (strain ATCC BAA-895 / CDC 4225-83 / SGSC4696).